The primary structure comprises 78 residues: Large ribosomal subunit protein bL28 (78 aa).

The tract at residues 1–20 (MSRVCQVTGKRPVTGNNRSH) is disordered.

It belongs to the bacterial ribosomal protein bL28 family.

This Vibrio atlanticus (strain LGP32) (Vibrio splendidus (strain Mel32)) protein is Large ribosomal subunit protein bL28.